The chain runs to 560 residues: Trans-activating transcriptional regulatory protein (560 aa).

The disordered stretch occupies residues 106–133 (DSMKRKASELDSDSDSGESSKGKKRVIK).

This sequence belongs to the nucleopolyhedrovirus IE-1 protein family.

In terms of biological role, regulatory transcriptional protein, which trans-activates gene expression from early baculovirus promoters. Can also trans-activate its own promoter, suggesting that it is autoregulated during normal infection of insect cells. In Choristoneura fumiferana nuclear polyhedrosis virus (CfMNPV), this protein is Trans-activating transcriptional regulatory protein (IE1).